The chain runs to 328 residues: Malate dehydrogenase (328 aa).

An NAD(+)-binding site is contributed by 11–17 (GAAGQIG). Substrate-binding residues include Arg-94 and Arg-100. NAD(+)-binding positions include Asn-107, Gln-114, and 131–133 (VGN). Asn-133 and Arg-164 together coordinate substrate. His-189 acts as the Proton acceptor in catalysis.

It belongs to the LDH/MDH superfamily. MDH type 2 family.

It catalyses the reaction (S)-malate + NAD(+) = oxaloacetate + NADH + H(+). In terms of biological role, catalyzes the reversible oxidation of malate to oxaloacetate. This Stenotrophomonas maltophilia (strain K279a) protein is Malate dehydrogenase.